Consider the following 101-residue polypeptide: Small ribosomal subunit protein eS24 (101 aa).

Belongs to the eukaryotic ribosomal protein eS24 family.

The sequence is that of Small ribosomal subunit protein eS24 from Methanosarcina barkeri (strain Fusaro / DSM 804).